The following is a 454-amino-acid chain: Tryptophanase (454 aa).

K256 bears the N6-(pyridoxal phosphate)lysine mark.

The protein belongs to the beta-eliminating lyase family. In terms of assembly, homotetramer. It depends on pyridoxal 5'-phosphate as a cofactor.

The enzyme catalyses L-tryptophan + H2O = indole + pyruvate + NH4(+). Its pathway is amino-acid degradation; L-tryptophan degradation via pyruvate pathway; indole and pyruvate from L-tryptophan: step 1/1. In Hyphomonas neptunium (strain ATCC 15444), this protein is Tryptophanase.